Reading from the N-terminus, the 100-residue chain is Urease subunit gamma (100 aa).

The protein belongs to the urease gamma subunit family. Heterotrimer of UreA (gamma), UreB (beta) and UreC (alpha) subunits. Three heterotrimers associate to form the active enzyme.

It is found in the cytoplasm. It carries out the reaction urea + 2 H2O + H(+) = hydrogencarbonate + 2 NH4(+). Its pathway is nitrogen metabolism; urea degradation; CO(2) and NH(3) from urea (urease route): step 1/1. The protein is Urease subunit gamma of Cupriavidus pinatubonensis (strain JMP 134 / LMG 1197) (Cupriavidus necator (strain JMP 134)).